Reading from the N-terminus, the 77-residue chain is Acyl carrier protein homolog (77 aa).

The region spanning methionine 1–leucine 76 is the Carrier domain. Serine 36 carries the post-translational modification O-(pantetheine 4'-phosphoryl)serine.

Post-translationally, 4'-phosphopantetheine is transferred from CoA to a specific serine of the apo-ACP-like protein.

It participates in lipid metabolism; fatty acid biosynthesis. Functionally, carrier of the growing fatty acid chain in fatty acid biosynthesis. The protein is Acyl carrier protein homolog of Ureaplasma parvum serovar 3 (strain ATCC 700970).